Here is a 307-residue protein sequence, read N- to C-terminus: Protein phosphatase PTC7 homolog fig (307 aa).

The PPM-type phosphatase domain maps to 41 to 300 (VQGSSKDQQL…DDITVILASV (260 aa)). Mn(2+) contacts are provided by aspartate 77, glycine 78, and aspartate 222.

This sequence belongs to the PP2C family. The cofactor is Mg(2+). It depends on Mn(2+) as a cofactor.

The enzyme catalyses O-phospho-L-seryl-[protein] + H2O = L-seryl-[protein] + phosphate. It carries out the reaction O-phospho-L-threonyl-[protein] + H2O = L-threonyl-[protein] + phosphate. This is Protein phosphatase PTC7 homolog fig from Drosophila grimshawi (Hawaiian fruit fly).